The sequence spans 68 residues: Pleurocidin (68 aa).

A signal peptide spans 1 to 22 (MKFTATFLMMAIFVLMVEPGEC). Positions 48 to 68 (GDKQELNKRAVDEDPNVIVFE) are excised as a propeptide.

This sequence belongs to the pleurocidin family. In terms of tissue distribution, goblet cells.

It is found in the secreted. It localises to the membrane. Its function is as follows. Antimicrobial peptide with potent activity against Gram-positive and Gram-negative bacteria. Activity against E.coli and B.subtilis. Weaker activity against L.mucor, s.marcescens and P.aeruginosa. May play a role in innate host defense. This is Pleurocidin (ple1) from Pseudopleuronectes americanus (Winter flounder).